Consider the following 449-residue polypeptide: Protein cortex (449 aa).

6 WD repeats span residues 108–148 (TYSY…ISQG), 149–188 (YAEY…KIDS), 198–237 (NRNC…ISWR), 283–327 (DSDW…VRDT), 345–382 (TGEL…DQWG), and 386–425 (SGLD…KKMK). Residues 386–397 (SGLDRVRTMVFS) carry the D-box motif.

It belongs to the WD repeat CORT family.

It localises to the cytoplasm. Functionally, controls wing pigmentation patterning by regulating scale cell development, thereby playing a key role in mimicry and crypsis. Probably acts as an activator of the anaphase promoting complex/cyclosome (APC/C) that promotes the ubiquitin ligase activity and substrate specificity of the APC/C. In Heliconius erato (Crimson patched longwing butterfly), this protein is Protein cortex.